Consider the following 156-residue polypeptide: ATP synthase subunit b (156 aa).

The helical transmembrane segment at 3–23 threads the bilayer; the sequence is ITFTIFAQSLAFAALIWIVAT.

This sequence belongs to the ATPase B chain family. In terms of assembly, F-type ATPases have 2 components, F(1) - the catalytic core - and F(0) - the membrane proton channel. F(1) has five subunits: alpha(3), beta(3), gamma(1), delta(1), epsilon(1). F(0) has three main subunits: a(1), b(2) and c(10-14). The alpha and beta chains form an alternating ring which encloses part of the gamma chain. F(1) is attached to F(0) by a central stalk formed by the gamma and epsilon chains, while a peripheral stalk is formed by the delta and b chains.

The protein localises to the cell inner membrane. F(1)F(0) ATP synthase produces ATP from ADP in the presence of a proton or sodium gradient. F-type ATPases consist of two structural domains, F(1) containing the extramembraneous catalytic core and F(0) containing the membrane proton channel, linked together by a central stalk and a peripheral stalk. During catalysis, ATP synthesis in the catalytic domain of F(1) is coupled via a rotary mechanism of the central stalk subunits to proton translocation. In terms of biological role, component of the F(0) channel, it forms part of the peripheral stalk, linking F(1) to F(0). The sequence is that of ATP synthase subunit b from Xylella fastidiosa (strain 9a5c).